Reading from the N-terminus, the 200-residue chain is 3-isopropylmalate dehydratase small subunit (200 aa).

This sequence belongs to the LeuD family. LeuD type 1 subfamily. Heterodimer of LeuC and LeuD.

The enzyme catalyses (2R,3S)-3-isopropylmalate = (2S)-2-isopropylmalate. Its pathway is amino-acid biosynthesis; L-leucine biosynthesis; L-leucine from 3-methyl-2-oxobutanoate: step 2/4. In terms of biological role, catalyzes the isomerization between 2-isopropylmalate and 3-isopropylmalate, via the formation of 2-isopropylmaleate. The chain is 3-isopropylmalate dehydratase small subunit from Pseudarthrobacter chlorophenolicus (strain ATCC 700700 / DSM 12829 / CIP 107037 / JCM 12360 / KCTC 9906 / NCIMB 13794 / A6) (Arthrobacter chlorophenolicus).